The primary structure comprises 1067 residues: Kinesin-like protein KIF11 (1067 aa).

The 342-residue stretch at 18–359 (NIQVVVRCRP…LEYANRAKNI (342 aa)) folds into the Kinesin motor domain. 105 to 112 (GQTGTGKT) lines the ATP pocket. Residues 365–480 (VNQKLTKRAL…SKEQLAQEAF (116 aa)) adopt a coiled-coil conformation. Thr-937 is modified (phosphothreonine; by CDK1). Ser-1046 carries the phosphoserine; by NEK6 modification. The interval 1048 to 1067 (IMDEAEQSLPKSKLPLRMQN) is disordered.

It belongs to the TRAFAC class myosin-kinesin ATPase superfamily. Kinesin family. BimC subfamily. As to quaternary structure, heterotetramer of two heavy and two light chains. Interacts with aurka. In terms of processing, phosphorylation of Thr-937 during mitosis controls the association of this protein with the spindle apparatus. A subset of this protein primarily localized at the spindle pole is phosphorylated by NEK6 during mitosis. Post-translationally, phosphorylated on a serine residue by aurka.

The protein localises to the cytoplasm. The protein resides in the cytoskeleton. It localises to the spindle pole. Its function is as follows. Plus end-directed motor protein required for establishing a bipolar spindle. Associates with both interphase and mitotic spindle microtubules. May be involved in nuclear divisions taking place during the development of unfertilized eggs. Required in non-mitotic cells for transport of secretory proteins from the Golgi complex to the cell surface. This Xenopus tropicalis (Western clawed frog) protein is Kinesin-like protein KIF11.